The primary structure comprises 313 residues: Ethylene-responsive transcription factor ERN2 (313 aa).

Residues 1–10 (MEIQFDEPKK) are compositionally biased toward basic and acidic residues. The disordered stretch occupies residues 1–29 (MEIQFDEPKKSLRPKKVNKFKGRNKKSET). Basic residues predominate over residues 11-24 (SLRPKKVNKFKGRN). A DNA-binding region (AP2/ERF) is located at residues 32–89 (KFVGVRQRPSGRYVAEIKDTTQNIRMWLGTFETAEEAARAYDEAATLLRGSKTRTNFV). Disordered stretches follow at residues 108-143 (NRKK…TSST) and 157-204 (TSAS…SSST). 2 stretches are compositionally biased toward low complexity: residues 122-143 (SSTT…TSST) and 157-193 (TSAS…TNVN).

This sequence belongs to the AP2/ERF transcription factor family. ERF subfamily. As to expression, expressed in roots, root hairs and leaves. Expressed in root epidermis and root hairs.

It localises to the nucleus. Functionally, transcription factor involved in symbiotic nodule signaling in response to rhizobial Nod factors (NFs). Binds to the GCC box (NF-responsive box) of ENOD11 promoter. Acts as a transcriptional activator of NF-responsive box-containing target gene promoters in root hairs. Involved in early stages of root nodule development. Functions redundantly with ERN1. Is essential with ERN1 for the initiation of root hair infection, and nodule organogenesis and development. Required for accurate expression of the NF signaling genes ENOD11 and ENOD12. The sequence is that of Ethylene-responsive transcription factor ERN2 from Medicago truncatula (Barrel medic).